The primary structure comprises 395 residues: Transmembrane protein 79 (395 aa).

A disordered region spans residues 1 to 115 (MTEPETLALL…PPTKLEELPE (115 aa)). Residues 1-204 (MTEPETLALL…GREALRAVAS (204 aa)) lie on the Cytoplasmic side of the membrane. The chain crosses the membrane as a helical span at residues 205 to 225 (VGAALILFPCLLYGAYAFLPF). Over 226–244 (DAPRLPTMSSRLIYTLRCG) the chain is Extracellular. Residues 245–265 (VFATFPIVLGILVYGLSLLCF) traverse the membrane as a helical segment. The Cytoplasmic portion of the chain corresponds to 266–290 (AALRPFGEPRREVEIHRQYVAQSVQ). The chain crosses the membrane as a helical span at residues 291–311 (LFILYFFNLAVLSTYLPQDAL). Over 312 to 313 (KL) the chain is Extracellular. A helical transmembrane segment spans residues 314–334 (LPLLTGLFAISRLIYWLTFAV). Topologically, residues 335–343 (GRSFRGFGY) are cytoplasmic. The chain crosses the membrane as a helical span at residues 344–364 (GLTFLPLLSMLLWNFYYMFVV). Over 365 to 395 (EPERMLTASESRLDYPDHARSASDYRPRSRG) the chain is Extracellular.

The protein resides in the lysosome. The protein localises to the golgi apparatus. It is found in the trans-Golgi network. It localises to the membrane. Functionally, contributes to the epidermal integrity and skin barrier function. Plays a role in the lamellar granule (LG) secretory system and in the stratum corneum (SC) epithelial cell formation. The polypeptide is Transmembrane protein 79 (TMEM79) (Bos taurus (Bovine)).